A 165-amino-acid polypeptide reads, in one-letter code: Peptide deformylase (165 aa).

Cys93 and His135 together coordinate Fe cation. Residue Glu136 is part of the active site. Residue His139 coordinates Fe cation.

The protein belongs to the polypeptide deformylase family. The cofactor is Fe(2+).

It catalyses the reaction N-terminal N-formyl-L-methionyl-[peptide] + H2O = N-terminal L-methionyl-[peptide] + formate. Removes the formyl group from the N-terminal Met of newly synthesized proteins. Requires at least a dipeptide for an efficient rate of reaction. N-terminal L-methionine is a prerequisite for activity but the enzyme has broad specificity at other positions. The sequence is that of Peptide deformylase from Thermodesulfovibrio yellowstonii (strain ATCC 51303 / DSM 11347 / YP87).